Consider the following 117-residue polypeptide: Non-specific lipid-transfer protein 3 (117 aa).

The N-terminal stretch at 1–25 (MAGLVKLSCLVLACMIVAGPIATNA) is a signal peptide. Intrachain disulfides connect cysteine 29–cysteine 76, cysteine 39–cysteine 53, cysteine 54–cysteine 99, and cysteine 74–cysteine 113.

This sequence belongs to the plant LTP family.

Functionally, plant non-specific lipid-transfer proteins transfer phospholipids as well as galactolipids across membranes. May play a role in wax or cutin deposition in the cell walls of expanding epidermal cells and certain secretory tissues. The protein is Non-specific lipid-transfer protein 3 (LTP3) of Brassica napus (Rape).